Reading from the N-terminus, the 160-residue chain is Cyclic pyranopterin monophosphate synthase (160 aa).

Substrate contacts are provided by residues 73-75 and 110-111; these read LCH and ME. The active site involves aspartate 125.

Belongs to the MoaC family. In terms of assembly, homohexamer; trimer of dimers.

It catalyses the reaction (8S)-3',8-cyclo-7,8-dihydroguanosine 5'-triphosphate = cyclic pyranopterin phosphate + diphosphate. Its pathway is cofactor biosynthesis; molybdopterin biosynthesis. In terms of biological role, catalyzes the conversion of (8S)-3',8-cyclo-7,8-dihydroguanosine 5'-triphosphate to cyclic pyranopterin monophosphate (cPMP). The polypeptide is Cyclic pyranopterin monophosphate synthase (Pseudomonas paraeruginosa (strain DSM 24068 / PA7) (Pseudomonas aeruginosa (strain PA7))).